The primary structure comprises 65 residues: SCOCO-like protein 1 (65 aa).

Residues 8-44 adopt a coiled-coil conformation; that stretch reads RSLMEQKAMELQQQLQALLDEIDQNKQESENISRESE.

It belongs to the SLO1 family.

This is SCOCO-like protein 1 from Schizosaccharomyces pombe (strain 972 / ATCC 24843) (Fission yeast).